The primary structure comprises 343 residues: Ribonucleoside-diphosphate reductase small subunit (343 aa).

Aspartate 101, glutamate 131, and histidine 134 together coordinate Fe cation. The active site involves tyrosine 138. The chain crosses the membrane as a helical span at residues 188-208; that stretch reads ILMILIEGIFFSASFAAIAYL. Fe cation contacts are provided by glutamate 194, glutamate 228, and histidine 231.

It belongs to the ribonucleoside diphosphate reductase small chain family. As to quaternary structure, heterotetramer composed of a homodimer of the large subunit (R1) and a homodimer of the small subunit (R2). Larger multisubunit protein complex are also active, composed of (R1)n(R2)n. Requires Fe cation as cofactor.

It localises to the host membrane. The catalysed reaction is a 2'-deoxyribonucleoside 5'-diphosphate + [thioredoxin]-disulfide + H2O = a ribonucleoside 5'-diphosphate + [thioredoxin]-dithiol. Ribonucleoside-diphosphate reductase holoenzyme provides the precursors necessary for viral DNA synthesis. Allows virus growth in non-dividing cells, as well as reactivation from latency in infected hosts. Catalyzes the biosynthesis of deoxyribonucleotides from the corresponding ribonucleotides. The chain is Ribonucleoside-diphosphate reductase small subunit from Gallid herpesvirus 2 (strain Chicken/Md5/ATCC VR-987) (GaHV-2).